Reading from the N-terminus, the 412-residue chain is CCA-adding enzyme (412 aa).

ATP-binding residues include Gly8 and Arg11. CTP is bound by residues Gly8 and Arg11. Mg(2+) contacts are provided by Asp21 and Asp23. 3 residues coordinate ATP: Arg91, Arg137, and Arg140. CTP-binding residues include Arg91, Arg137, and Arg140.

It belongs to the tRNA nucleotidyltransferase/poly(A) polymerase family. Bacterial CCA-adding enzyme type 2 subfamily. Mg(2+) serves as cofactor.

It catalyses the reaction a tRNA precursor + 2 CTP + ATP = a tRNA with a 3' CCA end + 3 diphosphate. It carries out the reaction a tRNA with a 3' CCA end + 2 CTP + ATP = a tRNA with a 3' CCACCA end + 3 diphosphate. Catalyzes the addition and repair of the essential 3'-terminal CCA sequence in tRNAs without using a nucleic acid template. Adds these three nucleotides in the order of C, C, and A to the tRNA nucleotide-73, using CTP and ATP as substrates and producing inorganic pyrophosphate. tRNA 3'-terminal CCA addition is required both for tRNA processing and repair. Also involved in tRNA surveillance by mediating tandem CCA addition to generate a CCACCA at the 3' terminus of unstable tRNAs. While stable tRNAs receive only 3'-terminal CCA, unstable tRNAs are marked with CCACCA and rapidly degraded. The chain is CCA-adding enzyme from Buchnera aphidicola subsp. Schizaphis graminum (strain Sg).